The primary structure comprises 309 residues: Mitochondrial import receptor subunit TOM34 (309 aa).

Phosphoserine is present on Ser-8. 3 TPR repeats span residues 9–42 (VEQLRAAGNQNFRNGQYGEASALYERALRLLQAR), 51–84 (SVLYSNRAACYLKDGNCTDCIKDCTSALALVPFS), and 86–118 (KPLLRRASAYEALEKYSLAYVDYKTVLQIDNSV). Residues 158-187 (WSSLPSENHKETAKSKSKETTATKNRVPSA) form a disordered region. Ser-160 carries the phosphoserine modification. Basic and acidic residues predominate over residues 164–178 (ENHKETAKSKSKETT). Ser-186 carries the post-translational modification Phosphoserine. TPR repeat units follow at residues 193 to 226 (ARVLKEEGNELVKKGNHKKAIEKYSESLLFSSLE), 227 to 260 (SATYSNRALCHLVLKQYKEAEKDCTEALKLDGKN), and 262 to 294 (KAFYRRAQAYKALKDYKSSLADISSLLQIEPRN). Lys-197 participates in a covalent cross-link: Glycyl lysine isopeptide (Lys-Gly) (interchain with G-Cter in SUMO2).

It belongs to the Tom34 family. In terms of assembly, interacts with HSP90A, VCP, ATP6V1D, KIAA0665, AMPK, and DMAP1 through its TPR repeat.

It localises to the cytoplasm. The protein resides in the mitochondrion outer membrane. Its function is as follows. Plays a role in the import of cytosolically synthesized preproteins into mitochondria. Binds the mature portion of precursor proteins. Interacts with cellular components, and possesses weak ATPase activity. May be a chaperone-like protein that helps to keep newly synthesized precursors in an unfolded import compatible state. This is Mitochondrial import receptor subunit TOM34 (Tomm34) from Rattus norvegicus (Rat).